The primary structure comprises 260 residues: UPF0246 protein Bcen2424_2223 (260 aa).

The protein belongs to the UPF0246 family.

The protein is UPF0246 protein Bcen2424_2223 of Burkholderia cenocepacia (strain HI2424).